We begin with the raw amino-acid sequence, 344 residues long: MDENKKRALSAALSQIEKQFGKGSVMRMGDRVIEAVEVIPTGSLMLDIALGIGGLPKGRVVEIYGPESSGKTTLTLQAIAQCQKNGGTAAFIDAEHALDPIYAAKLGVNVDDLLLSQPDTGEQALEIADMLVRSGSVDIVVVDSVAALTPKAEIEGEMGDQLPGLQARLMSQALRKLTGNIKRSNTLVVFINQLRMKIGVMMPGQSPEVTTGGNALKFYASVRLDIRRIGAIKKGDEIIGNQTKIKVVKNKLAPPFKQVVTEILYGEGISREGELIDMGVEAKLVDKAGAWYSYGDERIGQGKDNARTYLRDNPQVATRLEAELREKFQPAEAPREAGDDEDKE.

Position 65-72 (65-72) interacts with ATP; the sequence is GPESSGKT. Residues 323–337 show a composition bias toward basic and acidic residues; sequence ELREKFQPAEAPREA. Positions 323–344 are disordered; the sequence is ELREKFQPAEAPREAGDDEDKE.

The protein belongs to the RecA family.

It localises to the cytoplasm. Functionally, can catalyze the hydrolysis of ATP in the presence of single-stranded DNA, the ATP-dependent uptake of single-stranded DNA by duplex DNA, and the ATP-dependent hybridization of homologous single-stranded DNAs. It interacts with LexA causing its activation and leading to its autocatalytic cleavage. The chain is Protein RecA from Xanthomonas euvesicatoria pv. vesicatoria (strain 85-10) (Xanthomonas campestris pv. vesicatoria).